A 269-amino-acid polypeptide reads, in one-letter code: Pertussis toxin subunit 1 (269 aa).

The N-terminal stretch at 1 to 34 (MRCTRAIRQTARTGWLTWLAILAVTAPVTSPAWA) is a signal peptide. Trp-60 serves as a coordination point for NAD(+). Active-site residues include His-69 and Glu-163. Residues Cys-75 and Cys-235 are joined by a disulfide bond.

Belongs to the bacterial exotoxin subunit A family. Pertussis toxin contains five different chains, S1-S5. They are organized into 2 functional subunits: A, composed of S1 (which is toxic) and B, containing S2, S3, S5, and two copies of S4 (B binds to the membrane receptors). Dimers of S2-S4 and S3-S4 are held together by S5.

The protein localises to the secreted. Its function is as follows. S1 is an NAD-dependent ADP-ribosyltransferase, which plays a crucial role in the pathogenesis of B.pertussis causing disruption of normal host cellular regulation. It catalyzes the ADP-ribosylation of a cysteine in the alpha subunit of host heterotrimeric G proteins. In the absence of G proteins it also catalyzes the cleavage of NAD(+) into ADP-ribose and nicotinamide. It irreversibly uncouples the G-alpha GTP-binding proteins from their membrane receptors. This chain is Pertussis toxin subunit 1 (ptxA), found in Bordetella pertussis (strain Tohama I / ATCC BAA-589 / NCTC 13251).